The sequence spans 191 residues: Cdc42 homolog (191 aa).

Residue 10 to 17 (GDGAVGKT) participates in GTP binding. The Effector region motif lies at 32–40 (YVPTVFDNY). GTP contacts are provided by residues 57-61 (DTAGQ) and 115-118 (TQID). The residue at position 188 (cysteine 188) is a Cysteine methyl ester. Cysteine 188 carries S-geranylgeranyl cysteine lipidation. Positions 189–191 (KFL) are cleaved as a propeptide — removed in mature form.

It belongs to the small GTPase superfamily. Rho family. CDC42 subfamily.

It is found in the cell junction. Its subcellular location is the adherens junction. The protein resides in the cell membrane. Regulates mbt kinase activity and is also required to recruit mbt to adherens junctions. Together with mbt, regulates photoreceptor cell morphogenesis. The polypeptide is Cdc42 homolog (Aedes aegypti (Yellowfever mosquito)).